The following is a 243-amino-acid chain: 6-carboxyhexanoate--CoA ligase (243 aa).

This sequence belongs to the BioW family. Homodimer. Requires Mg(2+) as cofactor.

It carries out the reaction heptanedioate + ATP + CoA = 6-carboxyhexanoyl-CoA + AMP + diphosphate. Its pathway is metabolic intermediate metabolism; pimeloyl-CoA biosynthesis; pimeloyl-CoA from pimelate: step 1/1. Functionally, catalyzes the transformation of pimelate into pimeloyl-CoA with concomitant hydrolysis of ATP to AMP. This chain is 6-carboxyhexanoate--CoA ligase, found in Thermocrinis albus (strain DSM 14484 / JCM 11386 / HI 11/12).